Consider the following 209-residue polypeptide: Large ribosomal subunit protein uL4 (209 aa).

The interval 45–77 (RQGTHKAKERAEVTGSTRKIKKQKGTGTARAGS) is disordered.

Belongs to the universal ribosomal protein uL4 family. Part of the 50S ribosomal subunit.

Its function is as follows. One of the primary rRNA binding proteins, this protein initially binds near the 5'-end of the 23S rRNA. It is important during the early stages of 50S assembly. It makes multiple contacts with different domains of the 23S rRNA in the assembled 50S subunit and ribosome. Forms part of the polypeptide exit tunnel. In Flavobacterium johnsoniae (strain ATCC 17061 / DSM 2064 / JCM 8514 / BCRC 14874 / CCUG 350202 / NBRC 14942 / NCIMB 11054 / UW101) (Cytophaga johnsonae), this protein is Large ribosomal subunit protein uL4.